The following is a 326-amino-acid chain: Tetraacyldisaccharide 4'-kinase (326 aa).

ATP is bound at residue 55 to 62; that stretch reads TVGGNGKT.

Belongs to the LpxK family.

The enzyme catalyses a lipid A disaccharide + ATP = a lipid IVA + ADP + H(+). It functions in the pathway glycolipid biosynthesis; lipid IV(A) biosynthesis; lipid IV(A) from (3R)-3-hydroxytetradecanoyl-[acyl-carrier-protein] and UDP-N-acetyl-alpha-D-glucosamine: step 6/6. Functionally, transfers the gamma-phosphate of ATP to the 4'-position of a tetraacyldisaccharide 1-phosphate intermediate (termed DS-1-P) to form tetraacyldisaccharide 1,4'-bis-phosphate (lipid IVA). The polypeptide is Tetraacyldisaccharide 4'-kinase (Tolumonas auensis (strain DSM 9187 / NBRC 110442 / TA 4)).